A 324-amino-acid polypeptide reads, in one-letter code: Cyclin-dependent kinase C-3 (324 aa).

A Protein kinase domain is found at 27-320 (FRRIRKIGEG…AHDALCAAYF (294 aa)). Residues 33 to 41 (IGEGTYGEV) and Lys56 each bind ATP. Thr37 carries the phosphothreonine modification. The residue at position 38 (Tyr38) is a Phosphotyrosine. The active-site Proton acceptor is Asp160. Thr193 bears the Phosphothreonine mark.

This sequence belongs to the protein kinase superfamily. CMGC Ser/Thr protein kinase family. CDC2/CDKX subfamily.

The catalysed reaction is L-seryl-[protein] + ATP = O-phospho-L-seryl-[protein] + ADP + H(+). The enzyme catalyses L-threonyl-[protein] + ATP = O-phospho-L-threonyl-[protein] + ADP + H(+). It catalyses the reaction [DNA-directed RNA polymerase] + ATP = phospho-[DNA-directed RNA polymerase] + ADP + H(+). The sequence is that of Cyclin-dependent kinase C-3 (CDKC-1) from Oryza sativa subsp. japonica (Rice).